Consider the following 115-residue polypeptide: Ribonuclease P protein component (115 aa).

Belongs to the RnpA family. Consists of a catalytic RNA component (M1 or rnpB) and a protein subunit.

It carries out the reaction Endonucleolytic cleavage of RNA, removing 5'-extranucleotides from tRNA precursor.. In terms of biological role, RNaseP catalyzes the removal of the 5'-leader sequence from pre-tRNA to produce the mature 5'-terminus. It can also cleave other RNA substrates such as 4.5S RNA. The protein component plays an auxiliary but essential role in vivo by binding to the 5'-leader sequence and broadening the substrate specificity of the ribozyme. The protein is Ribonuclease P protein component of Bacillus cereus (strain Q1).